Here is a 544-residue protein sequence, read N- to C-terminus: Glucose starvation modulator protein 1 (544 aa).

Residues 20 to 48 (CVFCHSKHLQCSNERPCKNCMKRNLGDQC) constitute a DNA-binding region (zn(2)-C6 fungal-type). The tract at residues 65–93 (KKMKSRTNSISSSYRSPSVSESPQNPYTH) is disordered. Residues 70–86 (RTNSISSSYRSPSVSES) are compositionally biased toward low complexity. The PAS domain maps to 403-475 (SLIDYEKLLL…FKLFKSVAVG (73 aa)).

It belongs to the ERT1/acuK family.

It is found in the nucleus. Transcription factor which regulates nonfermentable carbon utilization. The protein is Glucose starvation modulator protein 1 (GSM1) of Debaryomyces hansenii (strain ATCC 36239 / CBS 767 / BCRC 21394 / JCM 1990 / NBRC 0083 / IGC 2968) (Yeast).